Consider the following 465-residue polypeptide: Serine/threonine-protein kinase 38 (465 aa).

Alanine 2 bears the N-acetylalanine mark. The segment at 62–87 is interaction with S100B; it reads KRLRRSAHARKETEFLRLKRTRLGLE. Threonine 74 carries the post-translational modification Phosphothreonine. Residues 89–382 enclose the Protein kinase domain; that stretch reads FESLKVIGRG…VEEIKNNLFF (294 aa). ATP-binding positions include 95–103 and lysine 118; that span reads IGRGAFGEV. Aspartate 212 (proton acceptor) is an active-site residue. Serine 264 carries the post-translational modification Phosphoserine. Serine 281 bears the Phosphoserine; by autocatalysis mark. Residues 306–311 carry the UFM1-interacting motif (UFIM) motif; the sequence is WSLGVI. One can recognise an AGC-kinase C-terminal domain in the interval 383 to 455; that stretch reads EGVDWEHIRE…KRFEGLTARG (73 aa). Threonine 444 is subject to Phosphothreonine; by STK24/MST3.

It belongs to the protein kinase superfamily. AGC Ser/Thr protein kinase family. As to quaternary structure, homodimeric S100B binds two molecules of STK38. Interacts with MOB1 and MOB2. Interacts with MAP3K1 and MAP3K2 (via the kinase catalytic domain). Forms a tripartite complex with MOBKL1B and STK3/MST2. Interacts with MICAL1; leading to inhibit the protein kinase activity by antagonizing activation by MST1/STK4. It depends on Mg(2+) as a cofactor. ISGylated. In terms of processing, phosphorylated by STK3/MST2 and this is enhanced by MOBKL1B. In terms of tissue distribution, expressed at high levels in spleen, lung, thymus, brain and fat tissue.

The protein localises to the nucleus. The protein resides in the cytoplasm. It localises to the chromosome. It carries out the reaction L-seryl-[protein] + ATP = O-phospho-L-seryl-[protein] + ADP + H(+). It catalyses the reaction L-threonyl-[protein] + ATP = O-phospho-L-threonyl-[protein] + ADP + H(+). Activated by binding of S100B which releases autoinhibitory N-lobe interactions, enabling ATP to bind and the autophosphorylation of Ser-281. Thr-444 then undergoes calcium-dependent phosphorylation by STK24/MST3. Interactions between phosphorylated Thr-444 and the N-lobe promote additional structural changes that complete the activation of the kinase. Autoinhibition is also released by the binding of MOB1/MOBKL1A and MOB2/HCCA2 to the N-terminal of STK38. Its function is as follows. Serine/threonine-protein kinase that acts as a negative regulator of MAP3K1/2 signaling. Converts MAP3K2 from its phosphorylated form to its non-phosphorylated form and inhibits autophosphorylation of MAP3K2. Acts as an ufmylation 'reader' in a kinase-independent manner: specifically recognizes and binds mono-ufmylated histone H4 in response to DNA damage, promoting the recruitment of SUV39H1 to the double-strand breaks, resulting in ATM activation. This chain is Serine/threonine-protein kinase 38, found in Mus musculus (Mouse).